The sequence spans 614 residues: MIKKASLLTACSVTAFSAWAQDTSPDTLVVTANRFEQPRSTVLAPTTVVTRQDIDRWQSTSVNDVLRRLPGVDITQNGGSGQLSSIFIRGTNASHVLVLIDGVRLNLAGVSGSADLSQFPIALVQRVEYIRGPRSAVYGSDAIGGVVNIITTRDEPGTEISAGWGSNSYQNYDVSTQQQLGDKTRVTLLGDYAHTHGYDVVAYGNTGTQAQTDNDGFLSKTLYGALEHNFTDAWSGFVRGYGYDNRTNYDAYYSPGSPLLDTRKLYSQSWDAGLRYNGELIKSQLITSYSHSKDYNYDPHYGRYDSSATLDEMKQYTVQWANNVIVGHGSIGAGVDWQKQTTTPGTGYVEDGYDQRNTGIYLTGLQQVGDFTFEGAARSDDNSQFGRHGTWQTSAGWEFIEGYRFIASYGTSYKAPNLGQLYGFYGNPNLDPEKSKQWEGAFEGLTAGVNWRISGYRNDVSDLIDYDDHTLKYYNEGKARIKGVEATANFDTGPLTHTVSYDYVDARNAITDTPLLRRAKQQVKYQLDWQLYDFDWGITYQYLGTRYDKDYSSYPYQTVKMGGVSLWDLAVAYPVTSHLTVRGKIANLFDKDYETVYGYQTAGREYTLSGSYTF.

Positions 1–20 are cleaved as a signal peptide; it reads MIKKASLLTACSVTAFSAWA. Topologically, residues 21–157 are periplasmic; the sequence is QDTSPDTLVV…NIITTRDEPG (137 aa). Residues 26–33 carry the TonB box motif; it reads DTLVVTAN. Residues 38–152 enclose the TBDR plug domain; sequence PRSTVLAPTT…IGGVVNIITT (115 aa). Residues L83, S85, N92, and 110 to 111 contribute to the cyanocob(III)alamin site; that span reads VS. The TBDR beta-barrel domain maps to 155-614; sequence EPGTEISAGW…EYTLSGSYTF (460 aa). Residues 158 to 165 form a beta stranded membrane-spanning segment; it reads TEISAGWG. Topologically, residues 166–168 are extracellular; the sequence is SNS. A beta stranded membrane pass occupies residues 169-178; the sequence is YQNYDVSTQQ. The Periplasmic portion of the chain corresponds to 179–183; it reads QLGDK. The chain crosses the membrane as a beta stranded span at residues 184–195; it reads TRVTLLGDYAHT. The Extracellular segment spans residues 196–216; sequence HGYDVVAYGNTGTQAQTDNDG. Ca(2+) contacts are provided by D199, Q211, D213, and D215. The beta stranded transmembrane segment at 217–227 threads the bilayer; sequence FLSKTLYGALE. Residues 228-231 are Periplasmic-facing; sequence HNFT. Residues 232–248 form a beta stranded membrane-spanning segment; it reads DAWSGFVRGYGYDNRTN. Residues Y249 and D250 each contribute to the Ca(2+) site. The Extracellular segment spans residues 249 to 262; it reads YDAYYSPGSPLLDT. A251 contacts cyanocob(III)alamin. Residue D261 coordinates Ca(2+). A beta stranded transmembrane segment spans residues 263–277; that stretch reads RKLYSQSWDAGLRYN. Residue G278 is a topological domain, periplasmic. A beta stranded transmembrane segment spans residues 279-296; sequence ELIKSQLITSYSHSKDYN. Residues 297-308 lie on the Extracellular side of the membrane; sequence YDPHYGRYDSSA. Position 309 (T309) interacts with cyanocob(III)alamin. A beta stranded membrane pass occupies residues 309–325; sequence TLDEMKQYTVQWANNVI. The Periplasmic portion of the chain corresponds to 326 to 327; that stretch reads VG. Residues 328–337 traverse the membrane as a beta stranded segment; it reads HGSIGAGVDW. The Extracellular segment spans residues 338 to 352; sequence QKQTTTPGTGYVEDG. A beta stranded transmembrane segment spans residues 353–369; sequence YDQRNTGIYLTGLQQVG. Residue D370 is a topological domain, periplasmic. The chain crosses the membrane as a beta stranded span at residues 371-381; sequence FTFEGAARSDD. The Extracellular portion of the chain corresponds to 382–384; the sequence is NSQ. A beta stranded membrane pass occupies residues 385-400; the sequence is FGRHGTWQTSAGWEFI. At 401-402 the chain is on the periplasmic side; sequence EG. A beta stranded transmembrane segment spans residues 403-417; it reads YRFIASYGTSYKAPN. At 418–433 the chain is on the extracellular side; it reads LGQLYGFYGNPNLDPE. Residues 434 to 443 traverse the membrane as a beta stranded segment; the sequence is KSKQWEGAFE. At 444–448 the chain is on the periplasmic side; sequence GLTAG. A beta stranded transmembrane segment spans residues 449-458; the sequence is VNWRISGYRN. The Extracellular portion of the chain corresponds to 459–472; sequence DVSDLIDYDDHTLK. Residues 473–490 form a beta stranded membrane-spanning segment; it reads YYNEGKARIKGVEATANF. At 491–493 the chain is on the periplasmic side; it reads DTG. Residues 494–509 form a beta stranded membrane-spanning segment; it reads PLTHTVSYDYVDARNA. Residues 510–516 lie on the Extracellular side of the membrane; sequence ITDTPLL. Position 517 (R517) interacts with cyanocob(III)alamin. A beta stranded transmembrane segment spans residues 517 to 529; the sequence is RRAKQQVKYQLDW. At 530 to 534 the chain is on the periplasmic side; that stretch reads QLYDF. A beta stranded transmembrane segment spans residues 535-550; it reads DWGITYQYLGTRYDKD. Residue Y551 participates in cyanocob(III)alamin binding. Residues 551 to 557 are Extracellular-facing; that stretch reads YSSYPYQ. Residues 558 to 572 form a beta stranded membrane-spanning segment; it reads TVKMGGVSLWDLAVA. Residues 573–584 are Periplasmic-facing; sequence YPVTSHLTVRGK. The beta stranded transmembrane segment at 585 to 596 threads the bilayer; that stretch reads IANLFDKDYETV. Residues 597–601 are Extracellular-facing; sequence YGYQT. Positions 597-614 match the TonB C-terminal box motif; it reads YGYQTAGREYTLSGSYTF. The beta stranded transmembrane segment at 602 to 614 threads the bilayer; the sequence is AGREYTLSGSYTF.

It belongs to the TonB-dependent receptor family. BtuB (TC 1.B.14.3.1) subfamily. Interacts with TonB. As to quaternary structure, (Microbial infection) The hairpin motif of the receptor-binding domain of colicin E3 (ColE3) interacts with BtuB without displacing BtuB's central plug. An N-terminal fragment of E3 binds OmpF; trimeric complexes with ColE3, BtuB and OmpF can be cross-linked and immunoprecipitated.

The protein resides in the cell outer membrane. With respect to regulation, calcium increases vitamin B12 binding affinity by a factor of 50-100. (Microbial infection) Colicins E1, E3 and K inhibit cyanocobalamin (CN-B12) uptake; E1 and E3 inhibit binding of CN-B12 to cells while colicin K inhibits a later, energy-dependent step of CN-B12. Its function is as follows. Involved in the active translocation of vitamin B12 (cyanocobalamin) across the outer membrane to the periplasmic space. It derives its energy for transport by interacting with the trans-periplasmic membrane protein TonB. In terms of biological role, (Microbial infection) Acts as a receptor for bacteriophages BF23 and C1, and for A and E colicins. Cyanocobalamin (CN-B12) in solid medium protects against colicins E1 and E3. Does not act as the translocon for colicin E3 (ColE3). The translocon is OmpF; trimeric complexes with ColE3, BtuB and OmpF can be cross-linked and immunoprecipitated. The chain is Vitamin B12 transporter BtuB from Escherichia coli (strain K12).